Here is a 185-residue protein sequence, read N- to C-terminus: Glycine-rich cell wall structural protein 2 (185 aa).

A signal peptide spans 1-27 (MATTKHLALAILVLLSIGMTTSARTLL). Residues 149-185 (GYGSGGGGGGGGGQGGGSGSGSGSGYGSGSGGGNGHH) form a disordered region.

Its subcellular location is the secreted. The protein localises to the cell wall. In terms of biological role, responsible for plasticity of the cell wall. The protein is Glycine-rich cell wall structural protein 2 (GRP0.9) of Oryza sativa subsp. indica (Rice).